A 509-amino-acid polypeptide reads, in one-letter code: Scavenger receptor class B member 1 (509 aa).

The Cytoplasmic segment spans residues 1–11; the sequence is MGNLSRARRVT. A helical transmembrane segment spans residues 12 to 32; the sequence is AALGFIGLLFAVLGIIMIVMV. Topologically, residues 33 to 440 are extracellular; that stretch reads PSIIKQQVLK…YIQLVLMPKV (408 aa). Residues Asn102, Asn108, Asn173, Asn212, Asn227, Asn255, Asn310, Asn330, and Asn383 are each glycosylated (N-linked (GlcNAc...) asparagine). An intrachain disulfide couples Cys251 to Cys384. A helical transmembrane segment spans residues 441–461; it reads LHYAQYVLLALGCVLLLIPII. Over 462–509 the chain is Cytoplasmic; the sequence is YQIRSQEKCYLFWISFKKGSKDKEAVQAYSEFLMTSAPKGTVLQEARL.

This sequence belongs to the CD36 family. N-glycosylated. Post-translationally, the six cysteines of the extracellular domain are all involved in intramolecular disulfide bonds.

The protein resides in the cell membrane. The protein localises to the membrane. It localises to the caveola. In terms of biological role, receptor for different ligands such as phospholipids, cholesterol ester, lipoproteins, phosphatidylserine and apoptotic cells. Receptor for HDL, mediating selective uptake of cholesteryl ether and HDL-dependent cholesterol efflux. Also facilitates the flux of free and esterified cholesterol between the cell surface and apoB-containing lipoproteins and modified lipoproteins, although less efficiently than HDL. May be involved in the phagocytosis of apoptotic cells, via its phosphatidylserine binding activity. This is Scavenger receptor class B member 1 (SCARB1) from Bos taurus (Bovine).